The sequence spans 335 residues: Pro-cathepsin H (335 aa).

A signal peptide spans Met-1–Ala-22. The propeptide at Ala-23–Ser-97 is activation peptide. Residue Asn-101 is glycosylated (N-linked (GlcNAc...) asparagine). Cystine bridges form between Cys-102/Cys-327, Cys-138/Cys-181, Cys-172/Cys-214, and Cys-272/Cys-322. Positions Lys-106–Pro-115 are excised as a propeptide. The active site involves Cys-141. N-linked (GlcNAc...) asparagine glycosylation occurs at Asn-230. Catalysis depends on residues His-281 and Asn-301.

It belongs to the peptidase C1 family. As to quaternary structure, composed of a mini chain and a large chain. The large chain may be split into heavy and light chain. All chains are held together by disulfide bonds.

It is found in the lysosome. The enzyme catalyses Hydrolysis of proteins, acting as an aminopeptidase (notably, cleaving Arg-|-Xaa bonds) as well as an endopeptidase.. In terms of biological role, important for the overall degradation of proteins in lysosomes. The polypeptide is Pro-cathepsin H (CTSH) (Homo sapiens (Human)).